The chain runs to 258 residues: Pimeloyl-[acyl-carrier protein] methyl ester esterase (258 aa).

In terms of domain architecture, AB hydrolase-1 spans 17–241 (VYLIHGWGAN…KAAHAPFLSH (225 aa)). Substrate is bound by residues W23, 83 to 84 (SL), and 145 to 149 (FLQLQ). S83 serves as the catalytic Nucleophile. Residues D207 and H235 contribute to the active site. Substrate is bound at residue H235.

This sequence belongs to the AB hydrolase superfamily. Carboxylesterase BioH family. As to quaternary structure, monomer.

The protein resides in the cytoplasm. The enzyme catalyses 6-carboxyhexanoyl-[ACP] methyl ester + H2O = 6-carboxyhexanoyl-[ACP] + methanol + H(+). Its pathway is cofactor biosynthesis; biotin biosynthesis. In terms of biological role, the physiological role of BioH is to remove the methyl group introduced by BioC when the pimeloyl moiety is complete. It allows to synthesize pimeloyl-ACP via the fatty acid synthetic pathway through the hydrolysis of the ester bonds of pimeloyl-ACP esters. The polypeptide is Pimeloyl-[acyl-carrier protein] methyl ester esterase (Neisseria meningitidis serogroup B (strain ATCC BAA-335 / MC58)).